The following is a 321-amino-acid chain: Probable arabinan endo-1,5-alpha-L-arabinosidase C (321 aa).

The first 18 residues, 1–18 (MYLYTLILLFLASANVNA), serve as a signal peptide directing secretion. The active-site Proton acceptor is aspartate 33. Asparagine 192 carries an N-linked (GlcNAc...) asparagine glycan. The active-site Proton donor is the glutamate 200. Asparagine 224 carries an N-linked (GlcNAc...) asparagine glycan.

It belongs to the glycosyl hydrolase 43 family.

It localises to the secreted. It catalyses the reaction Endohydrolysis of (1-&gt;5)-alpha-arabinofuranosidic linkages in (1-&gt;5)-arabinans.. It functions in the pathway glycan metabolism; L-arabinan degradation. Its function is as follows. Endo-1,5-alpha-L-arabinanase involved in degradation of pectin. Its preferred substrate is linear 1,5-alpha-L-arabinan. The protein is Probable arabinan endo-1,5-alpha-L-arabinosidase C (abnC) of Aspergillus fumigatus (strain ATCC MYA-4609 / CBS 101355 / FGSC A1100 / Af293) (Neosartorya fumigata).